A 141-amino-acid polypeptide reads, in one-letter code: Protein stum homolog (141 aa).

Serine 26 is modified (phosphoserine). Helical transmembrane passes span 51–71 and 87–107; these read FPVA…GTFV and RHVC…VLTA.

Belongs to the SPEC3 family. Stum subfamily.

The protein localises to the membrane. This Mus musculus (Mouse) protein is Protein stum homolog.